Reading from the N-terminus, the 184-residue chain is Ribosome-recycling factor (184 aa).

Belongs to the RRF family.

The protein resides in the cytoplasm. Its function is as follows. Responsible for the release of ribosomes from messenger RNA at the termination of protein biosynthesis. May increase the efficiency of translation by recycling ribosomes from one round of translation to another. This chain is Ribosome-recycling factor, found in Stenotrophomonas maltophilia (strain K279a).